We begin with the raw amino-acid sequence, 258 residues long: Pro-thyrotropin-releasing hormone-A (258 aa).

The first 22 residues, M1–G22, serve as a signal peptide directing secretion. Q78 bears the Pyrrolidone carboxylic acid mark. Residue P80 is modified to Proline amide. Basic and acidic residues-rich tracts occupy residues Y84 to E98 and E107 to D119. The segment at Y84 to F124 is disordered. Q92 is modified (pyrrolidone carboxylic acid). P94 bears the Proline amide mark. Q112 bears the Pyrrolidone carboxylic acid mark. The residue at position 114 (P114) is a Proline amide. Q131 is modified (pyrrolidone carboxylic acid). P133 is modified (proline amide). Pyrrolidone carboxylic acid is present on Q156. P158 is modified (proline amide). Disordered regions lie at residues Y166–V215 and S236–E258. A Pyrrolidone carboxylic acid modification is found at Q170. The residue at position 172 (P172) is a Proline amide. Residues G184 to Q193 show a composition bias toward basic and acidic residues. The residue at position 193 (Q193) is a Pyrrolidone carboxylic acid. P195 bears the Proline amide mark. Residue Q242 is modified to Pyrrolidone carboxylic acid. At P244 the chain carries Proline amide.

This sequence belongs to the TRH family.

Its subcellular location is the secreted. Functionally, functions as a regulator of the biosynthesis of TSH in the anterior pituitary gland and as a neurotransmitter/ neuromodulator in the central and peripheral nervous systems. The chain is Pro-thyrotropin-releasing hormone-A (trha) from Oncorhynchus nerka (Sockeye salmon).